Consider the following 193-residue polypeptide: CASP-like protein 2D1 (193 aa).

The tract at residues 1–24 is disordered; it reads MRANNNNTREEERSSSSKQQQPQA. Topologically, residues 1-29 are cytoplasmic; that stretch reads MRANNNNTREEERSSSSKQQQPQAHMSLK. Residues 30–50 form a helical membrane-spanning segment; that stretch reads IIDSCLRLSVVPLSVATIWLT. The Extracellular segment spans residues 51–73; that stretch reads VTNHESNPDYGNLDYNSIMGLKY. Residues 74-94 traverse the membrane as a helical segment; sequence MVGVSAISAIYALLSTISLWV. Residues 95 to 109 are Cytoplasmic-facing; sequence TCLVSKAWLFFVPDQ. A helical membrane pass occupies residues 110 to 132; that stretch reads VLAYVMTTSVAGATEIVYLLNKG. Residues 133–151 are Extracellular-facing; that stretch reads DKIVTWSEMCSSYPHYCSK. A helical transmembrane segment spans residues 152-172; that stretch reads LTIALGLHVFVLFFFLFLSVI. Topologically, residues 173-193 are cytoplasmic; it reads SAYRAFSPFDPPCDSQTNIDA.

It belongs to the Casparian strip membrane proteins (CASP) family. Homodimer and heterodimers.

It is found in the cell membrane. The sequence is that of CASP-like protein 2D1 from Arabidopsis lyrata subsp. lyrata (Lyre-leaved rock-cress).